The primary structure comprises 425 residues: Kynurenine/alpha-aminoadipate aminotransferase, mitochondrial (425 aa).

A mitochondrion-targeting transit peptide spans 1-29 (MNYSRFLTATSLARKTSPIRATVEIMSRA). Position 20 (arginine 20) interacts with substrate. A Phosphoserine modification is found at serine 40. Positions 74 and 142 each coordinate substrate. Residue lysine 172 is modified to N6-succinyllysine. Lysine 179 bears the N6-acetyllysine mark. Over residues 179–188 (KPEDSKDPTK) the composition is skewed to basic and acidic residues. The tract at residues 179–208 (KPEDSKDPTKRTPKFLYTIPNGNNPTGNSL) is disordered. Residues 198 to 208 (PNGNNPTGNSL) show a composition bias toward polar residues. Residue asparagine 202 coordinates substrate. Lysine 263 carries the post-translational modification N6-(pyridoxal phosphate)lysine; alternate. An N6-acetyllysine; alternate mark is found at lysine 263 and lysine 339. Residues lysine 263 and lysine 339 each carry the N6-succinyllysine; alternate modification. Lysine 351 is subject to N6-acetyllysine. Position 367 is an N6-acetyllysine; alternate (lysine 367). Lysine 367 carries the post-translational modification N6-succinyllysine; alternate. Arginine 399 is a binding site for substrate. Lysine 422 is modified (N6-acetyllysine).

This sequence belongs to the class-I pyridoxal-phosphate-dependent aminotransferase family. In terms of assembly, homodimer. Pyridoxal 5'-phosphate serves as cofactor. Post-translationally, the N-terminus is blocked.

It is found in the mitochondrion. The enzyme catalyses L-kynurenine + 2-oxoglutarate = kynurenate + L-glutamate + H2O. The catalysed reaction is L-2-aminoadipate + 2-oxoglutarate = 2-oxoadipate + L-glutamate. It catalyses the reaction glycine + 2-oxoglutarate = glyoxylate + L-glutamate. It carries out the reaction L-kynurenine + glyoxylate = kynurenate + glycine + H2O. The enzyme catalyses 3-hydroxy-L-kynurenine + glyoxylate = xanthurenate + glycine + H2O. The catalysed reaction is 2-oxohexanoate + L-kynurenine = L-2-aminohexanoate + kynurenate + H2O. It catalyses the reaction 3-phenylpyruvate + L-kynurenine = kynurenate + L-phenylalanine + H2O. It carries out the reaction 4-methylsulfanyl-2-oxobutanoate + L-kynurenine = kynurenate + L-methionine + H2O. The enzyme catalyses 2-oxo-3-sulfanylpropanoate + L-kynurenine = kynurenate + L-cysteine + H2O. The catalysed reaction is indole-3-pyruvate + L-kynurenine = kynurenate + L-tryptophan + H2O. It catalyses the reaction 2-oxopentanoate + L-kynurenine = L-2-aminopentanoate + kynurenate + H2O. It carries out the reaction 4-methyl-2-oxopentanoate + L-kynurenine = kynurenate + L-leucine + H2O. The enzyme catalyses glyoxylate + L-methionine = 4-methylsulfanyl-2-oxobutanoate + glycine. The catalysed reaction is L-2-aminoadipate + glyoxylate = 2-oxoadipate + glycine. It catalyses the reaction L-tyrosine + glyoxylate = 3-(4-hydroxyphenyl)pyruvate + glycine. It carries out the reaction glyoxylate + L-phenylalanine = 3-phenylpyruvate + glycine. The enzyme catalyses L-tryptophan + glyoxylate = indole-3-pyruvate + glycine. The catalysed reaction is L-leucine + glyoxylate = 4-methyl-2-oxopentanoate + glycine. It catalyses the reaction 2-oxobutanoate + L-kynurenine = (2S)-2-aminobutanoate + kynurenate + H2O. It carries out the reaction 2-oxoadipate + L-kynurenine = L-2-aminoadipate + kynurenate + H2O. The enzyme catalyses 2-oxoadipate + L-kynurenine = 4-(2-aminophenyl)-2,4-dioxobutanoate + L-2-aminoadipate. It participates in amino-acid degradation; L-lysine degradation via saccharopine pathway; glutaryl-CoA from L-lysine: step 4/6. Functionally, transaminase with broad substrate specificity. Has transaminase activity towards aminoadipate, kynurenine, methionine and glutamate. Shows activity also towards tryptophan, aspartate and hydroxykynurenine. Accepts a variety of oxo-acids as amino-group acceptors, with a preference for 2-oxoglutarate, 2-oxocaproic acid, phenylpyruvate and alpha-oxo-gamma-methiol butyric acid. Can also use glyoxylate as amino-group acceptor (in vitro). The protein is Kynurenine/alpha-aminoadipate aminotransferase, mitochondrial of Rattus norvegicus (Rat).